The following is a 706-amino-acid chain: Protein psiG (706 aa).

Residues 1–23 (MKIILTLLIILFSLNKNLNFVSS) form the signal peptide. At 24-644 (EVTKSRICSI…FVCKPAAIIS (621 aa)) the chain is on the extracellular side. Asparagine 95, asparagine 107, asparagine 212, asparagine 296, asparagine 429, asparagine 521, asparagine 532, and asparagine 616 each carry an N-linked (GlcNAc...) asparagine glycan. Positions 109–253 (TLDKSSNIYS…SDYCGVCQGD (145 aa)) constitute a PA14 domain. Residues 645-665 (TSVIVGVSVAAAVVAIAIVVA) traverse the membrane as a helical segment. Residues 666–706 (SKKGYDAWAASNNNSLASLTSNPLYENPTGNGDNPMYQPNS) are Cytoplasmic-facing. A disordered region spans residues 687–706 (NPLYENPTGNGDNPMYQPNS). Residues 693–706 (PTGNGDNPMYQPNS) are compositionally biased toward polar residues.

The protein belongs to the prespore-cell-inducing factor family.

It is found in the membrane. This is Protein psiG (psiG-1) from Dictyostelium discoideum (Social amoeba).